The chain runs to 282 residues: Pyrroline-5-carboxylate reductase (282 aa).

It belongs to the pyrroline-5-carboxylate reductase family.

The enzyme catalyses L-proline + NADP(+) = (S)-1-pyrroline-5-carboxylate + NADPH + 2 H(+). It carries out the reaction L-proline + NAD(+) = (S)-1-pyrroline-5-carboxylate + NADH + 2 H(+). Its pathway is amino-acid biosynthesis; L-proline biosynthesis; L-proline from L-glutamate 5-semialdehyde: step 1/1. The polypeptide is Pyrroline-5-carboxylate reductase (pro3) (Schizosaccharomyces pombe (strain 972 / ATCC 24843) (Fission yeast)).